A 423-amino-acid chain; its full sequence is Large ribosomal subunit protein mL37 (423 aa).

A mitochondrion-targeting transit peptide spans 1–29 (MALASGPARRALAGSGQLGLGGFGAPRRG).

It belongs to the mitochondrion-specific ribosomal protein mL37 family. As to quaternary structure, component of the mitochondrial large ribosomal subunit (mt-LSU). Mature mammalian 55S mitochondrial ribosomes consist of a small (28S) and a large (39S) subunit. The 28S small subunit contains a 12S ribosomal RNA (12S mt-rRNA) and 30 different proteins. The 39S large subunit contains a 16S rRNA (16S mt-rRNA), a copy of mitochondrial valine transfer RNA (mt-tRNA(Val)), which plays an integral structural role, and 52 different proteins. mL37 forms a heterodimer with mL65.

Its subcellular location is the mitochondrion. The sequence is that of Large ribosomal subunit protein mL37 (MRPL37) from Homo sapiens (Human).